Consider the following 513-residue polypeptide: Putative thymidine phosphorylase 2 (513 aa).

Belongs to the thymidine/pyrimidine-nucleoside phosphorylase family. Type 2 subfamily.

The catalysed reaction is thymidine + phosphate = 2-deoxy-alpha-D-ribose 1-phosphate + thymine. The chain is Putative thymidine phosphorylase 2 from Acidovorax sp. (strain JS42).